Reading from the N-terminus, the 1072-residue chain is Carbamoyl phosphate synthase large chain (1072 aa).

Residues 1–401 (MPKYKDINKV…SLLKAVRSLE (401 aa)) form a carboxyphosphate synthetic domain region. The ATP site is built by Arg129, Arg169, Gly175, Gly176, Lys208, Leu210, Glu215, Gly241, Val242, His243, Gln284, and Glu298. Positions 133–327 (KRKMQEIGEP…IAKVAAKIAI (195 aa)) constitute an ATP-grasp 1 domain. Residues Gln284, Glu298, and Asn300 each coordinate Mg(2+). Positions 284, 298, and 300 each coordinate Mn(2+). Residues 402 to 544 (IKAYGLRLNN…YIYSTYGEED (143 aa)) are oligomerization domain. Residues 545-929 (EVEIHEIPKV…ALYKALEGAG (385 aa)) form a carbamoyl phosphate synthetic domain region. An ATP-grasp 2 domain is found at 671–861 (SKLLKELNIN…MVKLAVEVAL (191 aa)). Residues Arg707, Lys746, Ile748, Glu752, Gly777, Val778, His779, Ser780, Gln820, and Glu832 each contribute to the ATP site. Mg(2+) is bound by residues Gln820, Glu832, and Asn834. Mn(2+) contacts are provided by Gln820, Glu832, and Asn834. In terms of domain architecture, MGS-like spans 930-1072 (LKIPKKGKIL…QKDNVKNLVL (143 aa)). The tract at residues 930-1072 (LKIPKKGKIL…QKDNVKNLVL (143 aa)) is allosteric domain.

Belongs to the CarB family. As to quaternary structure, composed of two chains; the small (or glutamine) chain promotes the hydrolysis of glutamine to ammonia, which is used by the large (or ammonia) chain to synthesize carbamoyl phosphate. Tetramer of heterodimers (alpha,beta)4. Mg(2+) serves as cofactor. Mn(2+) is required as a cofactor.

It catalyses the reaction hydrogencarbonate + L-glutamine + 2 ATP + H2O = carbamoyl phosphate + L-glutamate + 2 ADP + phosphate + 2 H(+). The catalysed reaction is hydrogencarbonate + NH4(+) + 2 ATP = carbamoyl phosphate + 2 ADP + phosphate + 2 H(+). The protein operates within amino-acid biosynthesis; L-arginine biosynthesis; carbamoyl phosphate from bicarbonate: step 1/1. It participates in pyrimidine metabolism; UMP biosynthesis via de novo pathway; (S)-dihydroorotate from bicarbonate: step 1/3. In terms of biological role, large subunit of the glutamine-dependent carbamoyl phosphate synthetase (CPSase). CPSase catalyzes the formation of carbamoyl phosphate from the ammonia moiety of glutamine, carbonate, and phosphate donated by ATP, constituting the first step of 2 biosynthetic pathways, one leading to arginine and/or urea and the other to pyrimidine nucleotides. The large subunit (synthetase) binds the substrates ammonia (free or transferred from glutamine from the small subunit), hydrogencarbonate and ATP and carries out an ATP-coupled ligase reaction, activating hydrogencarbonate by forming carboxy phosphate which reacts with ammonia to form carbamoyl phosphate. The polypeptide is Carbamoyl phosphate synthase large chain (Thermoanaerobacter sp. (strain X514)).